The sequence spans 153 residues: MSNQLNTMDIKEIMNSLPHRYPFLLIDRVLDYTPGETLHAIKNVTINEPFFQGHFPIQPVMPGVLILEAMAQATGLLAYKTMEAAVTDDSLYYFAGIDKARFKRVVEPGDQLHFEVKMVKERRGIGVFTGVVKVDGELVCSAEIMCARREIKK.

H54 is an active-site residue.

The protein belongs to the thioester dehydratase family. FabZ subfamily.

Its subcellular location is the cytoplasm. The catalysed reaction is a (3R)-hydroxyacyl-[ACP] = a (2E)-enoyl-[ACP] + H2O. In terms of biological role, involved in unsaturated fatty acids biosynthesis. Catalyzes the dehydration of short chain beta-hydroxyacyl-ACPs and long chain saturated and unsaturated beta-hydroxyacyl-ACPs. This is 3-hydroxyacyl-[acyl-carrier-protein] dehydratase FabZ from Shewanella sediminis (strain HAW-EB3).